Reading from the N-terminus, the 189-residue chain is MKYRYFAKKSFLFISMLAAFKTFAFELPSVPFPAPGSDEILFVVRDTTFNTNAPVNVEVSDFWTNRNVKRKPYKDVYGQSVFTTSGTKWLTSYMTVNINDKDYTMAAVSGYKHGHSAVFVKSDQVQLQHSYDSVANFVGEDEDSIPSKMYLDETPEYFVNVEAYESGSGNILVMCISNKESFFECKHQQ.

A signal peptide spans 1–24 (MKYRYFAKKSFLFISMLAAFKTFA). A disulfide bridge connects residues Cys175 and Cys185.

The protein belongs to the TDH hemolysin family. Homodimer.

In terms of biological role, bacterial hemolysins are exotoxins that attack blood cell membranes and cause cell rupture by mechanisms not clearly defined. This chain is Thermostable direct hemolysin 2 (tdh2), found in Vibrio parahaemolyticus serotype O3:K6 (strain RIMD 2210633).